Reading from the N-terminus, the 369-residue chain is Pyruvate dehydrogenase E1 component subunit alpha (369 aa).

In terms of assembly, heterodimer of an alpha and a beta chain. Thiamine diphosphate serves as cofactor.

The catalysed reaction is N(6)-[(R)-lipoyl]-L-lysyl-[protein] + pyruvate + H(+) = N(6)-[(R)-S(8)-acetyldihydrolipoyl]-L-lysyl-[protein] + CO2. Its function is as follows. The pyruvate dehydrogenase complex catalyzes the overall conversion of pyruvate to acetyl-CoA and CO(2). It contains multiple copies of three enzymatic components: pyruvate dehydrogenase (E1), dihydrolipoamide acetyltransferase (E2) and lipoamide dehydrogenase (E3). The sequence is that of Pyruvate dehydrogenase E1 component subunit alpha (pdhA) from Geobacillus stearothermophilus (Bacillus stearothermophilus).